The following is a 368-amino-acid chain: Phosphate acyltransferase (368 aa).

This sequence belongs to the PlsX family. As to quaternary structure, homodimer. Probably interacts with PlsY.

The protein resides in the cytoplasm. It catalyses the reaction a fatty acyl-[ACP] + phosphate = an acyl phosphate + holo-[ACP]. The protein operates within lipid metabolism; phospholipid metabolism. Functionally, catalyzes the reversible formation of acyl-phosphate (acyl-PO(4)) from acyl-[acyl-carrier-protein] (acyl-ACP). This enzyme utilizes acyl-ACP as fatty acyl donor, but not acyl-CoA. The chain is Phosphate acyltransferase from Methylibium petroleiphilum (strain ATCC BAA-1232 / LMG 22953 / PM1).